Reading from the N-terminus, the 334-residue chain is Phosphate acyltransferase (334 aa).

Belongs to the PlsX family. As to quaternary structure, homodimer. Probably interacts with PlsY.

It is found in the cytoplasm. The enzyme catalyses a fatty acyl-[ACP] + phosphate = an acyl phosphate + holo-[ACP]. It participates in lipid metabolism; phospholipid metabolism. Catalyzes the reversible formation of acyl-phosphate (acyl-PO(4)) from acyl-[acyl-carrier-protein] (acyl-ACP). This enzyme utilizes acyl-ACP as fatty acyl donor, but not acyl-CoA. The protein is Phosphate acyltransferase of Thermotoga petrophila (strain ATCC BAA-488 / DSM 13995 / JCM 10881 / RKU-1).